The following is a 701-amino-acid chain: CRS2-associated factor 1, chloroplastic (701 aa).

The N-terminal 37 residues, 1–37, are a transit peptide targeting the chloroplast; it reads MSLKLNTPFPIFAPSLFPNHNPRAPSEIRFSRWGNAN. Disordered regions lie at residues 68 to 136 and 191 to 221; these read VHTH…PEVK and LPQSQKTPREFDSFRLPPVGKKGLKPVQKPG. CRM domains lie at 241–337 and 359–455; these read EPLT…TRPR and EGLT…LTTP. Residues 471–532 are disordered; the sequence is LPEDDEPSVS…SLQSWSTKDV (62 aa). Composition is skewed to polar residues over residues 479-492 and 520-530; these read VSPNQSQTMTQNPP and TINSLQSWSTK. Residues 564-586 form a CRS2 binding region; the sequence is RVLILMKQAVESGTALVLDAADL.

As to quaternary structure, interacts with CRS2 and RNA. Part of large ribonucleo-protein complexes that include group IIB introns, CRS2 and CAF1.

It localises to the plastid. Its subcellular location is the chloroplast stroma. In terms of biological role, required for the splicing of group IIB introns in chloroplasts. Forms splicing particles with CRS2. Interacts with RNA and confers intron specificity of the splicing particles. The sequence is that of CRS2-associated factor 1, chloroplastic from Arabidopsis thaliana (Mouse-ear cress).